The chain runs to 164 residues: ATP synthase subunit b (164 aa).

A helical transmembrane segment spans residues Ile8 to Phe28.

This sequence belongs to the ATPase B chain family. As to quaternary structure, F-type ATPases have 2 components, F(1) - the catalytic core - and F(0) - the membrane proton channel. F(1) has five subunits: alpha(3), beta(3), gamma(1), delta(1), epsilon(1). F(0) has three main subunits: a(1), b(2) and c(10-14). The alpha and beta chains form an alternating ring which encloses part of the gamma chain. F(1) is attached to F(0) by a central stalk formed by the gamma and epsilon chains, while a peripheral stalk is formed by the delta and b chains.

Its subcellular location is the cell membrane. Its function is as follows. F(1)F(0) ATP synthase produces ATP from ADP in the presence of a proton or sodium gradient. F-type ATPases consist of two structural domains, F(1) containing the extramembraneous catalytic core and F(0) containing the membrane proton channel, linked together by a central stalk and a peripheral stalk. During catalysis, ATP synthesis in the catalytic domain of F(1) is coupled via a rotary mechanism of the central stalk subunits to proton translocation. Component of the F(0) channel, it forms part of the peripheral stalk, linking F(1) to F(0). The sequence is that of ATP synthase subunit b from Christiangramia forsetii (strain DSM 17595 / CGMCC 1.15422 / KT0803) (Gramella forsetii).